The chain runs to 217 residues: Cytochrome b5 domain-containing protein 1 (217 aa).

The 67-residue stretch at Pro6–His72 folds into the Cytochrome b5 heme-binding domain. Heme-binding residues include His41 and His72.

It belongs to the cytochrome b5 family.

Its subcellular location is the cytoplasm. It is found in the cytoskeleton. The protein localises to the cilium axoneme. Functionally, radial spoke stalk protein that binds heme under oxidizing conditions. Required for the coordinated beating of multiple cilia maybe by functioning in a redox signaling pathway. The polypeptide is Cytochrome b5 domain-containing protein 1 (cyb5d1) (Xenopus laevis (African clawed frog)).